The primary structure comprises 522 residues: Glutamate--cysteine ligase (522 aa).

It belongs to the glutamate--cysteine ligase type 1 family. Type 1 subfamily.

The enzyme catalyses L-cysteine + L-glutamate + ATP = gamma-L-glutamyl-L-cysteine + ADP + phosphate + H(+). It participates in sulfur metabolism; glutathione biosynthesis; glutathione from L-cysteine and L-glutamate: step 1/2. The chain is Glutamate--cysteine ligase from Vibrio parahaemolyticus serotype O3:K6 (strain RIMD 2210633).